We begin with the raw amino-acid sequence, 206 residues long: Ribosomal RNA small subunit methyltransferase G (206 aa).

S-adenosyl-L-methionine contacts are provided by residues Gly71, Phe76, 122–123, and Arg135; that span reads AE.

This sequence belongs to the methyltransferase superfamily. RNA methyltransferase RsmG family.

Its subcellular location is the cytoplasm. In terms of biological role, specifically methylates the N7 position of a guanine in 16S rRNA. The sequence is that of Ribosomal RNA small subunit methyltransferase G from Bacteroides fragilis (strain ATCC 25285 / DSM 2151 / CCUG 4856 / JCM 11019 / LMG 10263 / NCTC 9343 / Onslow / VPI 2553 / EN-2).